Reading from the N-terminus, the 133-residue chain is Protein OPG104 (133 aa).

Residues 1 to 111 (MTDEQIYAFC…RYLNQEIRYP (111 aa)) lie on the Virion surface side of the membrane. Residues 112–132 (IIDIKWLPIGLLALAILILAF) traverse the membrane as a helical; Signal-anchor segment.

It belongs to the orthopoxvirus OPG104 family. As to quaternary structure, part of a stable entry-fusion complex (EFC) which is at least composed of proteins OPG143, OPG147, OPG155, OPG086, OPG094, OPG107, OPG104, and OPG099. Formation of the viral membrane is necessary for the assembly of the complex.

It localises to the virion membrane. In terms of biological role, envelope protein part of the entry-fusion complex responsible for the virus membrane fusion with host cell membrane during virus entry. Also plays a role in cell-cell fusion (syncytium formation). The sequence is that of Protein OPG104 (OPG104) from Variola virus (isolate Human/India/Ind3/1967) (VARV).